Here is a 97-residue protein sequence, read N- to C-terminus: Co-chaperonin GroES (97 aa).

Belongs to the GroES chaperonin family. Heptamer of 7 subunits arranged in a ring. Interacts with the chaperonin GroEL.

The protein resides in the cytoplasm. Its function is as follows. Together with the chaperonin GroEL, plays an essential role in assisting protein folding. The GroEL-GroES system forms a nano-cage that allows encapsulation of the non-native substrate proteins and provides a physical environment optimized to promote and accelerate protein folding. GroES binds to the apical surface of the GroEL ring, thereby capping the opening of the GroEL channel. The sequence is that of Co-chaperonin GroES from Burkholderia vietnamiensis.